The chain runs to 2005 residues: Sodium channel protein type 2 subunit alpha (2005 aa).

Topologically, residues 1–129 are cytoplasmic; the sequence is MAQSVLVPPG…KLAIKILVHS (129 aa). Ser-4 bears the Phosphoserine mark. A disordered region spans residues 28 to 61; sequence RIAEEKAKRPKQERKDEDDENGPKPNSDLEAGKS. Residue Lys-38 forms a Glycyl lysine isopeptide (Lys-Gly) (interchain with G-Cter in SUMO1) linkage. An I repeat occupies 111 to 456; that stretch reads ILTPFNPIRK…QQMLEQLKKQ (346 aa). Residues 130–148 traverse the membrane as a helical segment; it reads LFNMLIMCTILTNCVFMTM. Topologically, residues 149 to 155 are extracellular; the sequence is SNPPDWT. Residues 156-176 traverse the membrane as a helical segment; the sequence is KNVEYTFTGIYTFESLIKILA. Residues 177–190 are Cytoplasmic-facing; that stretch reads RGFCLEDFTFLRDP. A helical transmembrane segment spans residues 191–208; that stretch reads WNWLDFTVITFAYVTEFV. At 209 to 214 the chain is on the extracellular side; that stretch reads DLGNVS. Asn-212 carries an N-linked (GlcNAc...) asparagine glycan. Residues 215 to 231 form a helical membrane-spanning segment; sequence ALRTFRVLRALKTISVI. At 232–250 the chain is on the cytoplasmic side; it reads PGLKTIVGALIQSVKKLSD. Residues 251-270 traverse the membrane as a helical segment; it reads VMILTVFCLSVFALIGLQLF. Residues 271 to 369 are Extracellular-facing; that stretch reads MGNLRNKCLQ…PNYGYTSFDT (99 aa). A disulfide bridge links Cys-278 with Cys-338. 6 N-linked (GlcNAc...) asparagine glycosylation sites follow: Asn-285, Asn-291, Asn-297, Asn-303, Asn-308, and Asn-340. An intramembrane region (pore-forming) is located at residues 370 to 394; it reads FSWAFLSLFRLMTQDFWENLYQLTL. The Extracellular portion of the chain corresponds to 395 to 401; that stretch reads RAAGKTY. The helical transmembrane segment at 402-422 threads the bilayer; that stretch reads MIFFVLVIFLGSFYLINLILA. Residues 423 to 759 lie on the Cytoplasmic side of the membrane; that stretch reads VVAMAYEEQN…HLVNLVVMDP (337 aa). Phosphoserine is present on residues Ser-468, Ser-471, Ser-484, Ser-526, Ser-528, Ser-531, Ser-553, Ser-554, Ser-558, Ser-573, Ser-576, Ser-589, Ser-610, Ser-623, Ser-686, Ser-687, and Ser-721. Positions 494 to 529 are disordered; the sequence is SSKSEKELKNRRKKKKQKEQSGEEEKNDRVRKSESE. Basic and acidic residues predominate over residues 511–529; sequence KEQSGEEEKNDRVRKSESE. Residues 590–610 form a disordered region; the sequence is ENDFADDEHSTFEDNDSRRDS. The span at 596 to 610 shows a compositional bias: basic and acidic residues; the sequence is DEHSTFEDNDSRRDS. The stretch at 741–1013 is one II repeat; it reads CCKPWLKVKH…QIAVGRMQKG (273 aa). Residues 760 to 778 form a helical membrane-spanning segment; sequence FVDLAITICIVLNTLFMAM. Topologically, residues 779–789 are extracellular; the sequence is EHYPMTEQFSS. A helical transmembrane segment spans residues 790–809; the sequence is VLSVGNLVFTGIFTAEMFLK. Over 810–823 the chain is Cytoplasmic; that stretch reads IIAMDPYYYFQEGW. The helical transmembrane segment at 824–843 threads the bilayer; the sequence is NIFDGFIVSLSLMELGLANV. Topologically, residues 844-845 are extracellular; the sequence is EG. A helical membrane pass occupies residues 846–863; sequence LSVLRSFRLLRVFKLAKS. At 864 to 879 the chain is on the cytoplasmic side; sequence WPTLNMLIKIIGNSVG. Residues 880 to 898 form a helical membrane-spanning segment; that stretch reads ALGNLTLVLAIIVFIFAVV. The Extracellular segment spans residues 899 to 927; it reads GMQLFGKSYKECVCKISNDCELPRWHMHD. Cys-912 and Cys-918 are disulfide-bonded. The segment at 917–918 is binds SCN2B; it reads DC. Positions 928–948 form an intramembrane region, pore-forming; sequence FFHSFLIVFRVLCGEWIETMW. Over 949–961 the chain is Extracellular; that stretch reads DCMEVAGQTMCLT. Cysteines 950 and 959 form a disulfide. Residues 962–982 form a helical membrane-spanning segment; that stretch reads VFMMVMVIGNLVVLNLFLALL. Topologically, residues 983-1209 are cytoplasmic; sequence LSSFSSDNLA…TCYKIVEHNW (227 aa). The segment at 1120–1165 is disordered; it reads EEFSSESDMEESKEKLNATSSSEGSTVDIGAPAEGEQPEVEPEESL. A compositionally biased stretch (acidic residues) spans 1155 to 1165; the sequence is EQPEVEPEESL. An III repeat occupies 1190–1504; sequence KGKLWWNLRK…KKYYNAMKKL (315 aa). A helical membrane pass occupies residues 1210 to 1227; the sequence is FETFIVFMILLSSGALAF. Over 1228–1240 the chain is Extracellular; it reads EDIYIEQRKTIKT. A helical transmembrane segment spans residues 1241–1259; that stretch reads MLEYADKVFTYIFILEMLL. Residues 1260 to 1273 lie on the Cytoplasmic side of the membrane; it reads KWVAYGFQVYFTNA. Residues 1274–1292 traverse the membrane as a helical segment; it reads WCWLDFLIVDVSLVSLTAN. Over 1293–1300 the chain is Extracellular; it reads ALGYSELG. A helical membrane pass occupies residues 1301 to 1319; it reads AIKSLRTLRALRPLRALSR. The Cytoplasmic portion of the chain corresponds to 1320–1336; sequence FEGMRVVVNALLGAIPS. A helical membrane pass occupies residues 1337 to 1356; it reads IMNVLLVCLIFWLIFSIMGV. Over 1357-1408 the chain is Extracellular; that stretch reads NLFAGKFYHCINYTTGEMFDVSVVNNYSECKALIESNQTARWKNVKVNFDNV. Cysteines 1366 and 1386 form a disulfide. Asn-1368, Asn-1382, and Asn-1393 each carry an N-linked (GlcNAc...) asparagine glycan. An intramembrane region (pore-forming) is located at residues 1409–1430; the sequence is GLGYLSLLQVATFKGWMDIMYA. Residues 1431 to 1447 lie on the Extracellular side of the membrane; that stretch reads AVDSRNVELQPKYEDNL. The helical transmembrane segment at 1448–1469 threads the bilayer; it reads YMYLYFVIFIIFGSFFTLNLFI. Residues 1470–1532 lie on the Cytoplasmic side of the membrane; the sequence is GVIIDNFNQQ…MVFDFVTKQV (63 aa). Ser-1506 carries the post-translational modification Phosphoserine; by PKC. The IV repeat unit spans residues 1513 to 1811; the sequence is IPRPANKFQG…WEKFDPDATQ (299 aa). The chain crosses the membrane as a helical span at residues 1533-1550; it reads FDISIMILICLNMVTMMV. At 1551–1561 the chain is on the extracellular side; sequence ETDDQSQEMTN. A helical transmembrane segment spans residues 1562–1580; sequence ILYWINLVFIVLFTGECVL. Residues 1581 to 1592 lie on the Cytoplasmic side of the membrane; the sequence is KLISLRYYYFTI. A helical transmembrane segment spans residues 1593-1610; that stretch reads GWNIFDFVVVILSIVGMF. At 1611–1623 the chain is on the extracellular side; that stretch reads LAELIEKYFVSPT. Residues 1624–1640 traverse the membrane as a helical segment; that stretch reads LFRVIRLARIGRILRLI. Residues 1641-1659 lie on the Cytoplasmic side of the membrane; that stretch reads KGAKGIRTLLFALMMSLPA. The helical transmembrane segment at 1660–1677 threads the bilayer; that stretch reads LFNIGLLLFLVMFIYAIF. The Extracellular portion of the chain corresponds to 1678-1699; it reads GMSNFAYVKREVGIDDMFNFET. The segment at residues 1700–1722 is an intramembrane region (pore-forming); sequence FGNSMICLFQITTSAGWDGLLAP. Residues 1723–1752 are Extracellular-facing; it reads ILNSGPPDCDPDKDHPGSSVKGDCGNPSVG. Cys-1731 and Cys-1746 are joined by a disulfide. A helical transmembrane segment spans residues 1753–1775; that stretch reads IFFFVSYIIISFLVVVNMYIAVI. The Cytoplasmic segment spans residues 1776-2005; it reads LENFSVATEE…KGKDIRESKK (230 aa). In terms of domain architecture, IQ spans 1905 to 1934; sequence EEVSAIIIQRAYRRYLLKQKVKKVSSIYKK. Ser-1930 is modified (phosphoserine). Over residues 1935–1964 the composition is skewed to basic and acidic residues; it reads DKGKECDGTPIKEDTLIDKLNENSTPEKTD. A disordered region spans residues 1935-2005; the sequence is DKGKECDGTP…KGKDIRESKK (71 aa). Phosphothreonine occurs at positions 1943, 1963, and 1966. Ser-1971 is subject to Phosphoserine. The span at 1979–2005 shows a compositional bias: basic and acidic residues; it reads TKPEKEKFEKDKSEKEDKGKDIRESKK.

Belongs to the sodium channel (TC 1.A.1.10) family. Nav1.2/SCN2A subfamily. Heterooligomer of a large alpha subunit and a smaller beta subunit. Heterooligomer with SCN2B or SCN4B; disulfide-linked. Heterooligomer with SCN1B or SCN3B; non-covalently linked. Interacts with NEDD4L. Interacts with CALM. Interacts with TMEM233. Interacts with the conotoxin GVIIJ. Interacts with the spider beta/delta-theraphotoxin-Pre1a. Interacts with the conotoxin KIIIA. Interacts with the spider protoxin-II. Post-translationally, may be ubiquitinated by NEDD4L; which would promote its endocytosis. Phosphorylation at Ser-1506 by PKC in a highly conserved cytoplasmic loop slows inactivation of the sodium channel and reduces peak sodium currents. In terms of processing, sumoylated at Lys-38. Sumoylation is induced by hypoxia, increases voltage-gated sodium current and mediates the early response to acute hypoxia in neurons. Sumoylated SCN2A is located at the cell membrane.

It localises to the cell membrane. It carries out the reaction Na(+)(in) = Na(+)(out). Functionally, mediates the voltage-dependent sodium ion permeability of excitable membranes. Assuming opened or closed conformations in response to the voltage difference across the membrane, the protein forms a sodium-selective channel through which Na(+) ions may pass in accordance with their electrochemical gradient. Implicated in the regulation of hippocampal replay occurring within sharp wave ripples (SPW-R) important for memory. The protein is Sodium channel protein type 2 subunit alpha of Homo sapiens (Human).